We begin with the raw amino-acid sequence, 176 residues long: Nucleoside triphosphate/diphosphate phosphatase (176 aa).

The Proton donor role is filled by R23. Positions 87, 103, 105, 107, 120, and 123 each coordinate Mg(2+).

This sequence belongs to the Ntdp family. The cofactor is Mg(2+).

It carries out the reaction a ribonucleoside 5'-triphosphate + H2O = a ribonucleoside 5'-diphosphate + phosphate + H(+). The enzyme catalyses a ribonucleoside 5'-diphosphate + H2O = a ribonucleoside 5'-phosphate + phosphate + H(+). Has nucleoside phosphatase activity towards nucleoside triphosphates and nucleoside diphosphates. This is Nucleoside triphosphate/diphosphate phosphatase from Bacillus cereus (strain G9842).